A 91-amino-acid chain; its full sequence is ATP synthase epsilon chain (91 aa).

It belongs to the ATPase epsilon chain family. F-type ATPases have 2 components, CF(1) - the catalytic core - and CF(0) - the membrane proton channel. CF(1) has five subunits: alpha(3), beta(3), gamma(1), delta(1), epsilon(1). CF(0) has three main subunits: a, b and c.

Its subcellular location is the cell membrane. Its function is as follows. Produces ATP from ADP in the presence of a proton gradient across the membrane. In Micrococcus luteus (strain ATCC 4698 / DSM 20030 / JCM 1464 / CCM 169 / CCUG 5858 / IAM 1056 / NBRC 3333 / NCIMB 9278 / NCTC 2665 / VKM Ac-2230) (Micrococcus lysodeikticus), this protein is ATP synthase epsilon chain (atpC).